The sequence spans 209 residues: Orotate phosphoribosyltransferase (209 aa).

5-phospho-alpha-D-ribose 1-diphosphate-binding positions include R96, K100, H102, and E122 to S130. An orotate-binding site is contributed by S126.

This sequence belongs to the purine/pyrimidine phosphoribosyltransferase family. PyrE subfamily. In terms of assembly, homodimer. Mg(2+) serves as cofactor.

The enzyme catalyses orotidine 5'-phosphate + diphosphate = orotate + 5-phospho-alpha-D-ribose 1-diphosphate. Its pathway is pyrimidine metabolism; UMP biosynthesis via de novo pathway; UMP from orotate: step 1/2. In terms of biological role, catalyzes the transfer of a ribosyl phosphate group from 5-phosphoribose 1-diphosphate to orotate, leading to the formation of orotidine monophosphate (OMP). This is Orotate phosphoribosyltransferase from Streptococcus thermophilus (strain CNRZ 1066).